A 161-amino-acid chain; its full sequence is Phosphopantetheine adenylyltransferase (161 aa).

Substrate is bound at residue Ser-11. ATP-binding positions include 11–12 and His-19; that span reads SF. 3 residues coordinate substrate: Lys-43, Leu-75, and Arg-89. ATP contacts are provided by residues 90 to 92, Glu-100, and 125 to 131; these read GLR and YSFISSS.

Belongs to the bacterial CoaD family. In terms of assembly, homohexamer. Mg(2+) serves as cofactor.

It is found in the cytoplasm. The catalysed reaction is (R)-4'-phosphopantetheine + ATP + H(+) = 3'-dephospho-CoA + diphosphate. The protein operates within cofactor biosynthesis; coenzyme A biosynthesis; CoA from (R)-pantothenate: step 4/5. Reversibly transfers an adenylyl group from ATP to 4'-phosphopantetheine, yielding dephospho-CoA (dPCoA) and pyrophosphate. This is Phosphopantetheine adenylyltransferase from Staphylococcus saprophyticus subsp. saprophyticus (strain ATCC 15305 / DSM 20229 / NCIMB 8711 / NCTC 7292 / S-41).